Consider the following 316-residue polypeptide: 4-hydroxy-3-methylbut-2-enyl diphosphate reductase (316 aa).

[4Fe-4S] cluster is bound at residue Cys-12. (2E)-4-hydroxy-3-methylbut-2-enyl diphosphate contacts are provided by His-41 and His-74. Positions 41 and 74 each coordinate dimethylallyl diphosphate. Isopentenyl diphosphate is bound by residues His-41 and His-74. Cys-96 lines the [4Fe-4S] cluster pocket. A (2E)-4-hydroxy-3-methylbut-2-enyl diphosphate-binding site is contributed by His-124. His-124 serves as a coordination point for dimethylallyl diphosphate. His-124 serves as a coordination point for isopentenyl diphosphate. The active-site Proton donor is Glu-126. (2E)-4-hydroxy-3-methylbut-2-enyl diphosphate is bound at residue Thr-167. Cys-197 is a binding site for [4Fe-4S] cluster. Residues Ser-225, Ser-226, Asn-227, and Ser-269 each coordinate (2E)-4-hydroxy-3-methylbut-2-enyl diphosphate. Residues Ser-225, Ser-226, Asn-227, and Ser-269 each coordinate dimethylallyl diphosphate. Ser-225, Ser-226, Asn-227, and Ser-269 together coordinate isopentenyl diphosphate.

This sequence belongs to the IspH family. As to quaternary structure, homodimer. Requires [4Fe-4S] cluster as cofactor.

The enzyme catalyses isopentenyl diphosphate + 2 oxidized [2Fe-2S]-[ferredoxin] + H2O = (2E)-4-hydroxy-3-methylbut-2-enyl diphosphate + 2 reduced [2Fe-2S]-[ferredoxin] + 2 H(+). It carries out the reaction dimethylallyl diphosphate + 2 oxidized [2Fe-2S]-[ferredoxin] + H2O = (2E)-4-hydroxy-3-methylbut-2-enyl diphosphate + 2 reduced [2Fe-2S]-[ferredoxin] + 2 H(+). It functions in the pathway isoprenoid biosynthesis; dimethylallyl diphosphate biosynthesis; dimethylallyl diphosphate from (2E)-4-hydroxy-3-methylbutenyl diphosphate: step 1/1. The protein operates within isoprenoid biosynthesis; isopentenyl diphosphate biosynthesis via DXP pathway; isopentenyl diphosphate from 1-deoxy-D-xylulose 5-phosphate: step 6/6. Functionally, catalyzes the conversion of 1-hydroxy-2-methyl-2-(E)-butenyl 4-diphosphate (HMBPP) into a mixture of isopentenyl diphosphate (IPP) and dimethylallyl diphosphate (DMAPP). Acts in the terminal step of the DOXP/MEP pathway for isoprenoid precursor biosynthesis. This Escherichia coli (strain ATCC 8739 / DSM 1576 / NBRC 3972 / NCIMB 8545 / WDCM 00012 / Crooks) protein is 4-hydroxy-3-methylbut-2-enyl diphosphate reductase.